A 382-amino-acid chain; its full sequence is Alkanesulfonate monooxygenase (382 aa).

The protein belongs to the SsuD family.

The enzyme catalyses an alkanesulfonate + FMNH2 + O2 = an aldehyde + FMN + sulfite + H2O + 2 H(+). Functionally, catalyzes the desulfonation of aliphatic sulfonates. This is Alkanesulfonate monooxygenase from Pseudomonas entomophila (strain L48).